The primary structure comprises 330 residues: MKIRPVGITGLGMAVPERVLTNHDLERMVDTSDEWIRTRTGIRERRIAAPHEASSDYALRAAREAMAQAGVTPEQIDLIICATVTPDMPMPATAALVQAALGAHRAAAFDLSAACPGWIYGVVMAQQSIATGLYDCALVIGVELLSKMVNWQDRKTCVLFGDAAGAAVLQPVSEGRGILSSVLGAEGAGHCHLYTPAGGSRLPASPETVAQGLHYVHMNGPEVFKFAVRVMDEATVQVVEKAGLTVGDIDLLVPHQANVRIIDSAVKRLGLAPEKVVVNLDRYGNTSSASIPVALTEALTEGRVRDGDLVVCVSFGAGLVWGALALRWGR.

Active-site residues include Cys-115 and His-255. The segment at 256 to 260 is ACP-binding; that stretch reads QANVR. Asn-285 is an active-site residue.

This sequence belongs to the thiolase-like superfamily. FabH family. Homodimer.

The protein localises to the cytoplasm. The catalysed reaction is malonyl-[ACP] + acetyl-CoA + H(+) = 3-oxobutanoyl-[ACP] + CO2 + CoA. Its pathway is lipid metabolism; fatty acid biosynthesis. Its function is as follows. Catalyzes the condensation reaction of fatty acid synthesis by the addition to an acyl acceptor of two carbons from malonyl-ACP. Catalyzes the first condensation reaction which initiates fatty acid synthesis and may therefore play a role in governing the total rate of fatty acid production. Possesses both acetoacetyl-ACP synthase and acetyl transacylase activities. Its substrate specificity determines the biosynthesis of branched-chain and/or straight-chain of fatty acids. This is Beta-ketoacyl-[acyl-carrier-protein] synthase III from Symbiobacterium thermophilum (strain DSM 24528 / JCM 14929 / IAM 14863 / T).